The chain runs to 562 residues: Arginine--tRNA ligase (562 aa).

Residues 130 to 140 carry the 'HIGH' region motif; that stretch reads ANPTGPLHIGH.

It belongs to the class-I aminoacyl-tRNA synthetase family. Monomer.

The protein localises to the cytoplasm. It catalyses the reaction tRNA(Arg) + L-arginine + ATP = L-arginyl-tRNA(Arg) + AMP + diphosphate. This Geobacter metallireducens (strain ATCC 53774 / DSM 7210 / GS-15) protein is Arginine--tRNA ligase.